A 555-amino-acid chain; its full sequence is MPSWIGAVILPLLGLLLSLPAGADVKARSCGEVRQAYGAKGFSLADIPYQEIAGEHLRICPQEYTCCTTEMEDKLSQQSKLEFENLVEETSHFVRTTFVSRHKKFDEFFRELLENAEKSLNDMFVRTYGMLYMQNSEVFQDLFTELKRYYTGGNVNLEEMLNDFWARLLERMFQLINPQYHFSEDYLECVSKYTDQLKPFGDVPRKLKIQVTRAFIAARTFVQGLTVGREVANRVSKVSPTPGCIRALMKMLYCPYCRGLPTVRPCNNYCLNVMKGCLANQADLDTEWNLFIDAMLLVAERLEGPFNIESVMDPIDVKISEAIMNMQENSMQVSAKVFQGCGQPKPAPALRSARSAPENFNTRFRPYNPEERPTTAAGTSLDRLVTDIKEKLKLSKKVWSALPYTICKDESVTAGTSNEEECWNGHSKARYLPEIMNDGLTNQINNPEVDVDITRPDTFIRQQIMALRVMTNKLKNAYNGNDVNFQDTSDESSGSGSGSGCMDDVCPTEFEFVTTEAPAVDPDRREVDSSAAQRGHSLLSWSLTCIVLALQRLCR.

A signal peptide spans 1-23 (MPSWIGAVILPLLGLLLSLPAGA). The span at 348 to 357 (PALRSARSAP) shows a compositional bias: low complexity. Disordered stretches follow at residues 348 to 376 (PALR…PTTA) and 480 to 501 (GNDV…GSGC). A lipid anchor (GPI-anchor amidated serine) is attached at Ser-529. A propeptide spans 530–555 (SAAQRGHSLLSWSLTCIVLALQRLCR) (removed in mature form).

This sequence belongs to the glypican family. As to expression, widely expressed. High expression in fetal kidney and lung and lower expressions in fetal liver and brain. In adult tissues, very abundant in ovary, high levels also observed in liver, kidney, small intestine and colon. Not detected in peripheral blood leukocytes. Detected in breast cancer cells (at protein level).

Its subcellular location is the cell membrane. It is found in the secreted. It localises to the extracellular space. Functionally, cell surface proteoglycan that bears heparan sulfate. Putative cell surface coreceptor for growth factors, extracellular matrix proteins, proteases and anti-proteases. Enhances migration and invasion of cancer cells through WNT5A signaling. The protein is Glypican-6 (GPC6) of Homo sapiens (Human).